Reading from the N-terminus, the 4835-residue chain is Midasin (4835 aa).

AAA-ATPase protomer regions lie at residues 12–161, 324–689, 797–1049, 1096–1375, 1489–1738, and 1821–2110; these read EVLR…PLVL, RSLD…HRFR, MTTI…AEII, KFQD…DYIT, APTT…FGYR, and ALEA…SIDI. ATP-binding positions include 31–38, 356–363, 814–821, 1127–1134, 1513–1520, and 1839–1846; these read GPSASGRT, GPTGIGKT, GTTSSGKT, GVSGAGKT, GDPGVGKS, and GSPESGKS. Residues 2197-4058 are linker; the sequence is SVFIASTLNA…DGTGDQNVSK (1862 aa). Disordered regions lie at residues 4033–4056 and 4108–4523; these read DQKE…DQNV and IEEE…LLNP. Acidic residues-rich tracts occupy residues 4109–4133, 4141–4150, 4226–4241, 4282–4291, and 4315–4330; these read EEED…QGEA, EDDDSAEEYS, ADGE…EEEQ, VDIDDNEASD, and NDEE…DQEN. The span at 4331 to 4346 shows a compositional bias: polar residues; that stretch reads ITDSNPDANEVGTNDQ. Basic and acidic residues-rich tracts occupy residues 4347–4360, 4394–4415, and 4429–4438; these read KQTH…RQEN, EFQR…KDEA, and VEFDDSKSGR. Polar residues predominate over residues 4468–4477; the sequence is HNSSCETSQS. A compositionally biased stretch (basic and acidic residues) spans 4478–4488; sequence SHDRPPAEHLN. The region spanning 4629-4818 is the VWFA domain; it reads QVLLAVDDSS…RHIEDLPETL (190 aa).

This sequence belongs to the midasin family. In terms of assembly, associates with pre-60S ribosomes in the nucleoplasm.

It is found in the nucleus. Its subcellular location is the nucleolus. The protein localises to the nucleoplasm. Functionally, nuclear chaperone required for maturation and nuclear export of pre-60S ribosome subunits. Functions at successive maturation steps to remove ribosomal factors at critical transition points, first driving the exit of early pre-60S particles from the nucleolus and then driving late pre-60S particles from the nucleus. The polypeptide is Midasin (MDN1) (Giardia intestinalis (Giardia lamblia)).